The primary structure comprises 1311 residues: Clustered mitochondria protein homolog (1311 aa).

Residues 1 to 46 (MAATNEVIPTSENPSDVSGSSQKLATEETALANGVDHEEEDSGEAG) are disordered. Polar residues predominate over residues 7–24 (VIPTSENPSDVSGSSQKL). The 245-residue stretch at 335-579 (DITRTQENYL…RVTPLDITWM (245 aa)) folds into the Clu domain. Disordered stretches follow at residues 629-691 (ERKR…QERI) and 915-965 (QSQT…VNAS). Residues 655-691 (EASKSDEPTENGELAKKADESDKDAEPSKPAADQERI) are compositionally biased toward basic and acidic residues. The segment covering 915 to 930 (QSQTEAAAAPPTTNGE) has biased composition (polar residues). TPR repeat units follow at residues 1034–1067 (ARVY…SERT), 1076–1109 (LLNY…WKVV), and 1118–1151 (ITTI…CEEV). The segment at 1236–1311 (VSPRVTLGQT…RGGAAAAAGK (76 aa)) is disordered. A compositionally biased stretch (polar residues) spans 1242-1253 (LGQTQLQPQVGQ). Basic and acidic residues predominate over residues 1259-1279 (AGRDSRSSRGLDSRSIDELLK). Residues 1289 to 1303 (KNKKRPGRSNPKRRG) show a composition bias toward basic residues.

This sequence belongs to the CLU family. May associate with the eukaryotic translation initiation factor 3 (eIF-3) complex.

The protein resides in the cytoplasm. MRNA-binding protein involved in proper cytoplasmic distribution of mitochondria. This chain is Clustered mitochondria protein homolog, found in Sclerotinia sclerotiorum (strain ATCC 18683 / 1980 / Ss-1) (White mold).